We begin with the raw amino-acid sequence, 457 residues long: Siroheme synthase (457 aa).

Residues 1 to 204 form a precorrin-2 dehydrogenase /sirohydrochlorin ferrochelatase region; the sequence is MDHLPIFCQL…NDQKAITETT (204 aa). Residues 22 to 23 and 43 to 44 each bind NAD(+); these read DV and LA. Serine 128 carries the post-translational modification Phosphoserine. Positions 216-457 are uroporphyrinogen-III C-methyltransferase; it reads GEVVLVGAGP…RDKLNWFSNH (242 aa). Proline 225 contacts S-adenosyl-L-methionine. Residue aspartate 248 is the Proton acceptor of the active site. The active-site Proton donor is the lysine 270. Residues 301 to 303, isoleucine 306, 331 to 332, methionine 382, and glycine 411 contribute to the S-adenosyl-L-methionine site; these read GGD and TA.

The protein in the N-terminal section; belongs to the precorrin-2 dehydrogenase / sirohydrochlorin ferrochelatase family. It in the C-terminal section; belongs to the precorrin methyltransferase family.

The enzyme catalyses uroporphyrinogen III + 2 S-adenosyl-L-methionine = precorrin-2 + 2 S-adenosyl-L-homocysteine + H(+). The catalysed reaction is precorrin-2 + NAD(+) = sirohydrochlorin + NADH + 2 H(+). It carries out the reaction siroheme + 2 H(+) = sirohydrochlorin + Fe(2+). Its pathway is cofactor biosynthesis; adenosylcobalamin biosynthesis; precorrin-2 from uroporphyrinogen III: step 1/1. It participates in cofactor biosynthesis; adenosylcobalamin biosynthesis; sirohydrochlorin from precorrin-2: step 1/1. It functions in the pathway porphyrin-containing compound metabolism; siroheme biosynthesis; precorrin-2 from uroporphyrinogen III: step 1/1. The protein operates within porphyrin-containing compound metabolism; siroheme biosynthesis; siroheme from sirohydrochlorin: step 1/1. Its pathway is porphyrin-containing compound metabolism; siroheme biosynthesis; sirohydrochlorin from precorrin-2: step 1/1. Functionally, multifunctional enzyme that catalyzes the SAM-dependent methylations of uroporphyrinogen III at position C-2 and C-7 to form precorrin-2 via precorrin-1. Then it catalyzes the NAD-dependent ring dehydrogenation of precorrin-2 to yield sirohydrochlorin. Finally, it catalyzes the ferrochelation of sirohydrochlorin to yield siroheme. In Escherichia coli (strain 55989 / EAEC), this protein is Siroheme synthase.